A 437-amino-acid polypeptide reads, in one-letter code: Amino-acid acetyltransferase (437 aa).

The 141-residue stretch at Glu289–Lys429 folds into the N-acetyltransferase domain.

This sequence belongs to the acetyltransferase family. ArgA subfamily.

It is found in the cytoplasm. The enzyme catalyses L-glutamate + acetyl-CoA = N-acetyl-L-glutamate + CoA + H(+). Its pathway is amino-acid biosynthesis; L-arginine biosynthesis; N(2)-acetyl-L-ornithine from L-glutamate: step 1/4. This chain is Amino-acid acetyltransferase, found in Actinobacillus pleuropneumoniae serotype 7 (strain AP76).